The following is a 284-amino-acid chain: Shikimate dehydrogenase (NADP(+)) (284 aa).

Shikimate-binding positions include 23-25 (SLS) and threonine 70. Lysine 74 functions as the Proton acceptor in the catalytic mechanism. Position 86 (glutamate 86) interacts with NADP(+). Asparagine 95 and aspartate 111 together coordinate shikimate. NADP(+)-binding positions include 135–139 (GAGGA), 159–164 (NRTPGR), and alanine 227. Tyrosine 229 lines the shikimate pocket. Glycine 251 is an NADP(+) binding site.

Belongs to the shikimate dehydrogenase family. As to quaternary structure, homodimer.

It carries out the reaction shikimate + NADP(+) = 3-dehydroshikimate + NADPH + H(+). The protein operates within metabolic intermediate biosynthesis; chorismate biosynthesis; chorismate from D-erythrose 4-phosphate and phosphoenolpyruvate: step 4/7. Its function is as follows. Involved in the biosynthesis of the chorismate, which leads to the biosynthesis of aromatic amino acids. Catalyzes the reversible NADPH linked reduction of 3-dehydroshikimate (DHSA) to yield shikimate (SA). The polypeptide is Shikimate dehydrogenase (NADP(+)) (Rubrobacter xylanophilus (strain DSM 9941 / JCM 11954 / NBRC 16129 / PRD-1)).